The primary structure comprises 394 residues: Stabilizer of axonemal microtubules 2 (394 aa).

Mn stretches follow at residues S110–I122, D144–V158, N244–A256, K278–R292, L312–L324, and V346–I360.

This sequence belongs to the FAM154 family.

The sequence is that of Stabilizer of axonemal microtubules 2 (Saxo2) from Mus musculus (Mouse).